The following is a 132-amino-acid chain: uncharacterized protein (132 aa).

This is an uncharacterized protein from Gallus gallus (Chicken).